The chain runs to 466 residues: Na(+)/H(+) antiporter NhaA (466 aa).

11 helical membrane passes run 32 to 52 (VGGVLLLLAAITALIWANVPA), 74 to 94 (LSVQHWAADGLLAVFFFVAGI), 111 to 131 (AALPVAAALCGMAVPALVYTL), 142 to 162 (GWAVPTATDIAFALAVLAVIG), 172 to 192 (FLLTLAVVDDLFAILIIAVFF), 195 to 215 (DLNFAALAGAVIGLAVFWLLL), 221 to 241 (GWYVYVPLALVIWGLMYNSGI), 280 to 300 (GLAVPLFALFSAGVVISGGAL), 310 to 330 (LGVVLGLVVGKAIGIFGGTWL), 348 to 368 (VFAVASLAGIGFTVSLLIGEL), and 379 to 399 (EVKAAVLTGSLLAALIATTLL).

Belongs to the NhaA Na(+)/H(+) (TC 2.A.33) antiporter family.

It localises to the cell membrane. It catalyses the reaction Na(+)(in) + 2 H(+)(out) = Na(+)(out) + 2 H(+)(in). Functionally, na(+)/H(+) antiporter that extrudes sodium in exchange for external protons. In Streptomyces avermitilis (strain ATCC 31267 / DSM 46492 / JCM 5070 / NBRC 14893 / NCIMB 12804 / NRRL 8165 / MA-4680), this protein is Na(+)/H(+) antiporter NhaA.